We begin with the raw amino-acid sequence, 326 residues long: 4-hydroxythreonine-4-phosphate dehydrogenase (326 aa).

Positions 133 and 134 each coordinate substrate. A divalent metal cation contacts are provided by H163, H208, and H263. Substrate contacts are provided by K271, N280, and R289.

This sequence belongs to the PdxA family. In terms of assembly, homodimer. Zn(2+) is required as a cofactor. Mg(2+) serves as cofactor. The cofactor is Co(2+).

It localises to the cytoplasm. It catalyses the reaction 4-(phosphooxy)-L-threonine + NAD(+) = 3-amino-2-oxopropyl phosphate + CO2 + NADH. The protein operates within cofactor biosynthesis; pyridoxine 5'-phosphate biosynthesis; pyridoxine 5'-phosphate from D-erythrose 4-phosphate: step 4/5. Functionally, catalyzes the NAD(P)-dependent oxidation of 4-(phosphooxy)-L-threonine (HTP) into 2-amino-3-oxo-4-(phosphooxy)butyric acid which spontaneously decarboxylates to form 3-amino-2-oxopropyl phosphate (AHAP). The protein is 4-hydroxythreonine-4-phosphate dehydrogenase of Pseudoalteromonas atlantica (strain T6c / ATCC BAA-1087).